The primary structure comprises 142 residues: MAKEFSRTRRIAQQLQQELAVILQRDMKDPRIGFVTVNDVDVSRDLSYAKVFVTFYEEDLTLVEQKIAALTAAAPYVRTLVAGRMKLRVMPELRFIYDSSLVEGMRMSNLVSQVITNDKAKQKQAGREDDTPSVDEQEKDTD.

Over residues 118–130 the composition is skewed to basic and acidic residues; it reads DKAKQKQAGREDD. The tract at residues 118–142 is disordered; that stretch reads DKAKQKQAGREDDTPSVDEQEKDTD. The segment covering 131 to 142 has biased composition (acidic residues); that stretch reads TPSVDEQEKDTD.

This sequence belongs to the RbfA family. Monomer. Binds 30S ribosomal subunits, but not 50S ribosomal subunits or 70S ribosomes.

It localises to the cytoplasm. In terms of biological role, one of several proteins that assist in the late maturation steps of the functional core of the 30S ribosomal subunit. Associates with free 30S ribosomal subunits (but not with 30S subunits that are part of 70S ribosomes or polysomes). Required for efficient processing of 16S rRNA. May interact with the 5'-terminal helix region of 16S rRNA. This is Ribosome-binding factor A from Shewanella denitrificans (strain OS217 / ATCC BAA-1090 / DSM 15013).